A 304-amino-acid chain; its full sequence is Glycine--tRNA ligase alpha subunit (304 aa).

The protein belongs to the class-II aminoacyl-tRNA synthetase family. As to quaternary structure, tetramer of two alpha and two beta subunits.

The protein localises to the cytoplasm. It carries out the reaction tRNA(Gly) + glycine + ATP = glycyl-tRNA(Gly) + AMP + diphosphate. The chain is Glycine--tRNA ligase alpha subunit from Serratia proteamaculans (strain 568).